The chain runs to 616 residues: UvrABC system protein C (616 aa).

A GIY-YIG domain is found at 21-100 (TCPGVYQFKN…IKDLKPRYNI (80 aa)). The 36-residue stretch at 214 to 249 (GALIRTLSAEMHRYADELRFEEAAELKIQIEGLRKY) folds into the UVR domain.

This sequence belongs to the UvrC family. As to quaternary structure, interacts with UvrB in an incision complex.

The protein resides in the cytoplasm. The UvrABC repair system catalyzes the recognition and processing of DNA lesions. UvrC both incises the 5' and 3' sides of the lesion. The N-terminal half is responsible for the 3' incision and the C-terminal half is responsible for the 5' incision. This chain is UvrABC system protein C, found in Prosthecochloris aestuarii (strain DSM 271 / SK 413).